The primary structure comprises 157 residues: F-box protein SNE (157 aa).

Positions 24–70 constitute an F-box domain; it reads PVFSINDHHDVLVEILRRLDGSSLCSAACVCRLWSAVARNDSIWEEL.

Part of a SCF (ASK-cullin-F-box) protein ligase complex. Interacts directly with SKP1A and SKP1B. As to expression, highly expressed in flowers and at much lower level in seedlings, rosette leaves and green siliques.

It is found in the nucleus. It functions in the pathway protein modification; protein ubiquitination. Its function is as follows. Essential component of a SCF-type E3 ligase complex that positively regulates the gibberellin signaling pathway. Upon gibberellin treatment, such complex probably mediates the ubiquitination and subsequent degradation of DELLA proteins (GAI, RGA and RGL2), some repressors of the gibberellin pathway, leading to activate the pathway. Can partially complement the absence of GID2/SLY1. This Arabidopsis thaliana (Mouse-ear cress) protein is F-box protein SNE (SNE).